Here is a 1220-residue protein sequence, read N- to C-terminus: DNA polymerase catalytic subunit (1220 aa).

Disordered stretches follow at residues 21–43 and 641–691; these read GKRP…RPPQ and QADA…KPGV. A compositionally biased stretch (polar residues) spans 646–660; the sequence is SETSELAMDSQSHAF.

Belongs to the DNA polymerase type-B family. Forms a complex with the ssDNA-binding protein, the DNA polymerase processivity factor, and the alkaline exonuclease. Interacts with the helicase-primase complex composed of the primase, the helicase and the primase-associated factor; this interaction may coordinate leading and lagging strand DNA synthesis at the replication fork.

It is found in the host nucleus. It carries out the reaction DNA(n) + a 2'-deoxyribonucleoside 5'-triphosphate = DNA(n+1) + diphosphate. The catalysed reaction is Endonucleolytic cleavage to 5'-phosphomonoester.. Its function is as follows. Replicates viral genomic DNA. The replication complex is composed of six viral proteins: the DNA polymerase, processivity factor, primase, primase-associated factor, helicase, and ssDNA-binding protein. Additionally, the polymerase contains an intrinsic ribonuclease H (RNase H) activity that specifically degrades RNA/DNA heteroduplexes or duplex DNA substrates in the 5' to 3' direction. Therefore, it can catalyze the excision of the RNA primers that initiate the synthesis of Okazaki fragments at a replication fork during viral DNA replication. This is DNA polymerase catalytic subunit from Equine herpesvirus 1 (strain Ab4p) (EHV-1).